Consider the following 331-residue polypeptide: Ferrochelatase (331 aa).

Fe cation is bound by residues His187 and Glu286.

It belongs to the ferrochelatase family.

It localises to the cytoplasm. The enzyme catalyses heme b + 2 H(+) = protoporphyrin IX + Fe(2+). The protein operates within porphyrin-containing compound metabolism; protoheme biosynthesis; protoheme from protoporphyrin-IX: step 1/1. Catalyzes the ferrous insertion into protoporphyrin IX. In Legionella pneumophila subsp. pneumophila (strain Philadelphia 1 / ATCC 33152 / DSM 7513), this protein is Ferrochelatase.